A 269-amino-acid chain; its full sequence is 4-hydroxy-tetrahydrodipicolinate reductase (269 aa).

Residues 8–13 (GAAGRM) and Glu-34 each bind NAD(+). Position 35 (Arg-35) interacts with NADP(+). Residues 98–100 (GTT) and 122–125 (APNY) each bind NAD(+). His-155 acts as the Proton donor/acceptor in catalysis. His-156 lines the (S)-2,3,4,5-tetrahydrodipicolinate pocket. The Proton donor role is filled by Lys-159. Residue 165–166 (GT) coordinates (S)-2,3,4,5-tetrahydrodipicolinate.

This sequence belongs to the DapB family.

It localises to the cytoplasm. It carries out the reaction (S)-2,3,4,5-tetrahydrodipicolinate + NAD(+) + H2O = (2S,4S)-4-hydroxy-2,3,4,5-tetrahydrodipicolinate + NADH + H(+). It catalyses the reaction (S)-2,3,4,5-tetrahydrodipicolinate + NADP(+) + H2O = (2S,4S)-4-hydroxy-2,3,4,5-tetrahydrodipicolinate + NADPH + H(+). It participates in amino-acid biosynthesis; L-lysine biosynthesis via DAP pathway; (S)-tetrahydrodipicolinate from L-aspartate: step 4/4. Catalyzes the conversion of 4-hydroxy-tetrahydrodipicolinate (HTPA) to tetrahydrodipicolinate. This Aliivibrio fischeri (strain ATCC 700601 / ES114) (Vibrio fischeri) protein is 4-hydroxy-tetrahydrodipicolinate reductase.